A 669-amino-acid polypeptide reads, in one-letter code: MTSDLFSLHAPFRPTGDQPTAIASLIESLQGEHKFQTLLGATGTGKTFTMASVIAELGRPTLVLAHNKTLAAQLCNELRQFFPENAVEYFISYYDYYQPEAYIPVTDTYIEKTASINDEIDMLRHSATRSLFERRDVIVVASISCIYGLGIPSQYLKAAVPLQVGAEYDPRLVIRDLVNVQYSRNDVELQRGRFRLKGDVLEIVPAYEDRVIRIEFFGDEVEALRLIDPVSGEILQSLDRISIYPARHFVTPEETLEKACQQIQTEMEQQVAFLEKNNLLVEAQRLSQRTRYDLEMLREVGYCNGVENYSRYLADRQAGEPPECLVDYFPEDWLLVIDESHVTIPQLRGMYNGDQARKKVLIDHGFRLPSAADNRPLKAEEFWQKVKQCVFVSATPGVWEIEQSEARVIEQVIRPTGVLDPEIFVRPTTGQVDDLYGEIQTRVKLKERVLITTLTKRMAEDLTDYFSERGIKVQYLHSEIQSIQRIEILQALRDGEFDVLIGVNLLREGLDLPEVSLVAIMDADKEGFLRAERSLIQTIGRAARHIRGQAILYADNFTDSMQKAIAETERRRKIQQEYNEKHGITPQPINKRANNAILQFLDISRRLNSQQLEEVYEQAQDLPLEKIPDLIQQLEEKMQEAAKKQEFEVAAIYRDRIQHLRDRLLGHKK.

The Helicase ATP-binding domain occupies 27–414 (ESLQGEHKFQ…EARVIEQVIR (388 aa)). 40–47 (GATGTGKT) lines the ATP pocket. Residues 93–116 (YYDYYQPEAYIPVTDTYIEKTASI) carry the Beta-hairpin motif. One can recognise a Helicase C-terminal domain in the interval 431-597 (QVDDLYGEIQ…PINKRANNAI (167 aa)). The 36-residue stretch at 628-663 (PDLIQQLEEKMQEAAKKQEFEVAAIYRDRIQHLRDR) folds into the UVR domain.

The protein belongs to the UvrB family. In terms of assembly, forms a heterotetramer with UvrA during the search for lesions. Interacts with UvrC in an incision complex.

The protein resides in the cytoplasm. The UvrABC repair system catalyzes the recognition and processing of DNA lesions. A damage recognition complex composed of 2 UvrA and 2 UvrB subunits scans DNA for abnormalities. Upon binding of the UvrA(2)B(2) complex to a putative damaged site, the DNA wraps around one UvrB monomer. DNA wrap is dependent on ATP binding by UvrB and probably causes local melting of the DNA helix, facilitating insertion of UvrB beta-hairpin between the DNA strands. Then UvrB probes one DNA strand for the presence of a lesion. If a lesion is found the UvrA subunits dissociate and the UvrB-DNA preincision complex is formed. This complex is subsequently bound by UvrC and the second UvrB is released. If no lesion is found, the DNA wraps around the other UvrB subunit that will check the other stand for damage. The sequence is that of UvrABC system protein B from Synechocystis sp. (strain ATCC 27184 / PCC 6803 / Kazusa).